The chain runs to 364 residues: UDP-N-acetylglucosamine--N-acetylmuramyl-(pentapeptide) pyrophosphoryl-undecaprenol N-acetylglucosamine transferase (364 aa).

UDP-N-acetyl-alpha-D-glucosamine is bound by residues 13-15, asparagine 125, arginine 165, serine 192, and glutamine 293; that span reads TGG.

Belongs to the glycosyltransferase 28 family. MurG subfamily.

Its subcellular location is the cell inner membrane. It catalyses the reaction di-trans,octa-cis-undecaprenyl diphospho-N-acetyl-alpha-D-muramoyl-L-alanyl-D-glutamyl-meso-2,6-diaminopimeloyl-D-alanyl-D-alanine + UDP-N-acetyl-alpha-D-glucosamine = di-trans,octa-cis-undecaprenyl diphospho-[N-acetyl-alpha-D-glucosaminyl-(1-&gt;4)]-N-acetyl-alpha-D-muramoyl-L-alanyl-D-glutamyl-meso-2,6-diaminopimeloyl-D-alanyl-D-alanine + UDP + H(+). Its pathway is cell wall biogenesis; peptidoglycan biosynthesis. Cell wall formation. Catalyzes the transfer of a GlcNAc subunit on undecaprenyl-pyrophosphoryl-MurNAc-pentapeptide (lipid intermediate I) to form undecaprenyl-pyrophosphoryl-MurNAc-(pentapeptide)GlcNAc (lipid intermediate II). This chain is UDP-N-acetylglucosamine--N-acetylmuramyl-(pentapeptide) pyrophosphoryl-undecaprenol N-acetylglucosamine transferase, found in Cereibacter sphaeroides (strain ATCC 17025 / ATH 2.4.3) (Rhodobacter sphaeroides).